Here is a 226-residue protein sequence, read N- to C-terminus: ATP-dependent dethiobiotin synthetase BioD (226 aa).

Gly-12 to Val-17 lines the ATP pocket. Position 16 (Thr-16) interacts with Mg(2+). The active site involves Lys-37. Thr-41 provides a ligand contact to substrate. ATP is bound by residues Asp-49, Glu-108–Gly-111, Gly-169–Ser-170, and Pro-197–Gly-199. Mg(2+) contacts are provided by Asp-49 and Glu-108.

It belongs to the dethiobiotin synthetase family. Homodimer. Requires Mg(2+) as cofactor.

It localises to the cytoplasm. The catalysed reaction is (7R,8S)-7,8-diammoniononanoate + CO2 + ATP = (4R,5S)-dethiobiotin + ADP + phosphate + 3 H(+). It functions in the pathway cofactor biosynthesis; biotin biosynthesis; biotin from 7,8-diaminononanoate: step 1/2. Catalyzes a mechanistically unusual reaction, the ATP-dependent insertion of CO2 between the N7 and N8 nitrogen atoms of 7,8-diaminopelargonic acid (DAPA, also called 7,8-diammoniononanoate) to form a ureido ring. This is ATP-dependent dethiobiotin synthetase BioD from Mycobacterium leprae (strain Br4923).